The chain runs to 360 residues: Probable cinnamyl alcohol dehydrogenase 6 (360 aa).

Cys-48 provides a ligand contact to Zn(2+). Thr-50 serves as a coordination point for NADP(+). Residues His-70, Glu-71, Cys-101, Cys-104, Cys-107, Cys-115, and Cys-164 each coordinate Zn(2+). NADP(+)-binding positions include Thr-168, 192-197, 215-220, Thr-255, Gly-279, and 302-304; these read GLGGLG, STSPAK, and SMT.

This sequence belongs to the zinc-containing alcohol dehydrogenase family. Homodimer. Zn(2+) serves as cofactor.

It carries out the reaction (E)-cinnamyl alcohol + NADP(+) = (E)-cinnamaldehyde + NADPH + H(+). It catalyses the reaction (E)-coniferol + NADP(+) = (E)-coniferaldehyde + NADPH + H(+). The catalysed reaction is (E)-sinapyl alcohol + NADP(+) = (E)-sinapaldehyde + NADPH + H(+). The enzyme catalyses (E)-4-coumaroyl alcohol + NADP(+) = (E)-4-coumaraldehyde + NADPH + H(+). It carries out the reaction (E)-caffeyl alcohol + NADP(+) = (E)-caffeyl aldehyde + NADPH + H(+). The protein operates within aromatic compound metabolism; phenylpropanoid biosynthesis. Involved in lignin biosynthesis. Catalyzes the final step specific for the production of lignin monomers. Catalyzes the NADPH-dependent reduction of coniferaldehyde, 5-hydroxyconiferaldehyde, sinapaldehyde, 4-coumaraldehyde and caffeyl aldehyde to their respective alcohols. This chain is Probable cinnamyl alcohol dehydrogenase 6, found in Oryza sativa subsp. japonica (Rice).